Consider the following 327-residue polypeptide: MKAPVRVAVTGAAGQISYSLLFRIAAGEMLGKDQPVILQMLEITPALEALKGVAMELDDCAFPLLAGMVCSDDPNVAFKDADYALLVGARPRGPGMERKDLLEANAAIFSVQGKAINDHASRDIKVLVVGNPANTNALIAQRNAPDINPRQFTAMMRLDHNRGLSQLAAKLDVTLEDITKMTIWGNHSATQYPDLFHTLVKGDVAVEQVEKDWYENDFIPTVQQRGAAIIKARGASSAASAANAAIFHMRDWALGTPENDWVSMGVYSDGSYGIEEGLIYSFPCVCKNGDWEIVQGLTIDEFSRAKMTATENELKEERDAVKSLLPA.

11–17 (GAAGQIS) contacts NAD(+). Substrate contacts are provided by arginine 92 and arginine 98. NAD(+) is bound by residues asparagine 105, glutamine 112, and 129–131 (VGN). 2 residues coordinate substrate: asparagine 131 and arginine 162. The active-site Proton acceptor is histidine 187.

The protein belongs to the LDH/MDH superfamily. MDH type 2 family.

The catalysed reaction is (S)-malate + NAD(+) = oxaloacetate + NADH + H(+). Its function is as follows. Catalyzes the reversible oxidation of malate to oxaloacetate. In Saccharophagus degradans (strain 2-40 / ATCC 43961 / DSM 17024), this protein is Malate dehydrogenase.